A 279-amino-acid chain; its full sequence is Energy-coupling factor transporter ATP-binding protein EcfA1 (279 aa).

One can recognise an ABC transporter domain in the interval 5–240 (ITVNNLFFKY…GNRLISLGLD (236 aa)). An ATP-binding site is contributed by 40 to 47 (GHNGSGKS).

It belongs to the ABC transporter superfamily. Energy-coupling factor EcfA family. As to quaternary structure, forms a stable energy-coupling factor (ECF) transporter complex composed of 2 membrane-embedded substrate-binding proteins (S component), 2 ATP-binding proteins (A component) and 2 transmembrane proteins (T component).

The protein resides in the cell membrane. Functionally, ATP-binding (A) component of a common energy-coupling factor (ECF) ABC-transporter complex. Unlike classic ABC transporters this ECF transporter provides the energy necessary to transport a number of different substrates. This Streptococcus agalactiae serotype Ia (strain ATCC 27591 / A909 / CDC SS700) protein is Energy-coupling factor transporter ATP-binding protein EcfA1.